An 85-amino-acid chain; its full sequence is Small ribosomal subunit protein bS16 (85 aa).

It belongs to the bacterial ribosomal protein bS16 family.

The sequence is that of Small ribosomal subunit protein bS16 from Clostridium novyi (strain NT).